A 196-amino-acid polypeptide reads, in one-letter code: MSDLIAKTTLDQRIAALVTPVIEDLGYELVRLRVMSGKSPTLQIMAEKPEGGIEVDDCARISTEVSATLDVEDPIEDNYTLEVSSPGIDRPLTRLKDFDTWVGYEAKIETTELIEGRRRFKGALAGTEGDEVLIEIEEGTIGLKFEWLSDAKLVLTDDLIRDVLKGRKDAGQVDEAQFDEIQTIIDGDDEPPANTA.

It belongs to the RimP family.

It is found in the cytoplasm. In terms of biological role, required for maturation of 30S ribosomal subunits. The polypeptide is Ribosome maturation factor RimP (Dinoroseobacter shibae (strain DSM 16493 / NCIMB 14021 / DFL 12)).